Consider the following 795-residue polypeptide: Probable alpha,alpha-trehalose-phosphate synthase [UDP-forming] 4 (795 aa).

The segment at 4–469 is glycosyltransferase; it reads PRLLVVSMSL…WADDFMKLTL (466 aa).

It in the N-terminal section; belongs to the glycosyltransferase 20 family. This sequence in the C-terminal section; belongs to the trehalose phosphatase family.

The enzyme catalyses D-glucose 6-phosphate + UDP-alpha-D-glucose = alpha,alpha-trehalose 6-phosphate + UDP + H(+). This is Probable alpha,alpha-trehalose-phosphate synthase [UDP-forming] 4 (TPS4) from Arabidopsis thaliana (Mouse-ear cress).